The chain runs to 68 residues: Large ribosomal subunit protein bL35 (68 aa).

The protein belongs to the bacterial ribosomal protein bL35 family.

This chain is Large ribosomal subunit protein bL35, found in Aster yellows witches'-broom phytoplasma (strain AYWB).